A 491-amino-acid chain; its full sequence is MRNQGLGSWPVRRARMSPHATAVRHGGTALTYAELSRRVARLANGLRAAGVRPGDRVAYLGPNHPAYLETLFACGQAGAVFVPLNFRLGVPELDHALADSGASVLIHTPEHAETVAALAAGRLLRVPAGELDAADDEPPDLPVGLDDVCLLMYTSGSTGRPKGAMLTHGNLTWNCVNVLVETDLASDERALVAAPLFHAAALGMVCLPTLLKGGTVILHSAFDPGAVLSAVEQERVTLVFGVPTMYQAIAAHPRWRSADLSSLRTLLCGGAPVPADLASRYLDRGLAFVQGYGMTEAAPGVLVLDRAHVAEKIGSAGVPSFFTDVRLAGPSGEPVPPGEKGEIVVSGPNVMKGYWGRPEATAEVLRDGWFHSGDVATVDGDGYFHVVDRLKDMIISGGENIYPAEVENELYGYPGVEACAVIGVPDPRWGEVGKAVVVPADGSRIDGDELLAWLRTRLAGYKVPKSVEFTDRLPTTGSGKILKGEVRRRFG.

Threonine 154 is a Mg(2+) binding site. ATP contacts are provided by alanine 199, glycine 291, and threonine 295. Glutamate 296 provides a ligand contact to Mg(2+). ATP is bound by residues aspartate 374 and lysine 391.

Belongs to the ATP-dependent AMP-binding enzyme family. It depends on Mg(2+) as a cofactor.

It catalyses the reaction (E)-ferulate + ATP + CoA = (E)-feruloyl-CoA + AMP + diphosphate. Catalyzes the formation of (E)-feruloyl-CoA, AMP and diphosphate from (E)-ferulate, CoA and ATP. Involved in the degradation pathway of lignin-derived aromatic compounds of plant cell walls. Catalyzes the first enzymatic step in the conversion of ferulic acid into high value compound vanillin. In Amycolatopsis sp, this protein is Feruloyl-CoA synthase.